Consider the following 296-residue polypeptide: N-acetylmuramic acid 6-phosphate etherase 2 (296 aa).

Residues I55–K218 enclose the SIS domain. E83 serves as the catalytic Proton donor. E114 is a catalytic residue.

The protein belongs to the GCKR-like family. MurNAc-6-P etherase subfamily. Homodimer.

It carries out the reaction N-acetyl-D-muramate 6-phosphate + H2O = N-acetyl-D-glucosamine 6-phosphate + (R)-lactate. It functions in the pathway amino-sugar metabolism; N-acetylmuramate degradation. Its function is as follows. Specifically catalyzes the cleavage of the D-lactyl ether substituent of MurNAc 6-phosphate, producing GlcNAc 6-phosphate and D-lactate. This is N-acetylmuramic acid 6-phosphate etherase 2 from Lactiplantibacillus plantarum (strain ATCC BAA-793 / NCIMB 8826 / WCFS1) (Lactobacillus plantarum).